Here is a 203-residue protein sequence, read N- to C-terminus: GTP cyclohydrolase-2 (203 aa).

A GTP-binding site is contributed by 49–53 (RIHSE). Zn(2+) is bound by residues Cys54, Cys65, and Cys67. GTP contacts are provided by residues Gln70, 92-94 (EGR), and Thr114. Asp126 acts as the Proton acceptor in catalysis. Arg128 acts as the Nucleophile in catalysis. GTP contacts are provided by Thr149 and Lys154.

This sequence belongs to the GTP cyclohydrolase II family. It depends on Zn(2+) as a cofactor.

The catalysed reaction is GTP + 4 H2O = 2,5-diamino-6-hydroxy-4-(5-phosphoribosylamino)-pyrimidine + formate + 2 phosphate + 3 H(+). It functions in the pathway cofactor biosynthesis; riboflavin biosynthesis; 5-amino-6-(D-ribitylamino)uracil from GTP: step 1/4. Functionally, catalyzes the conversion of GTP to 2,5-diamino-6-ribosylamino-4(3H)-pyrimidinone 5'-phosphate (DARP), formate and pyrophosphate. The chain is GTP cyclohydrolase-2 from Shewanella oneidensis (strain ATCC 700550 / JCM 31522 / CIP 106686 / LMG 19005 / NCIMB 14063 / MR-1).